The primary structure comprises 245 residues: 1-(5-phosphoribosyl)-5-[(5-phosphoribosylamino)methylideneamino] imidazole-4-carboxamide isomerase (245 aa).

D7 (proton acceptor) is an active-site residue. D129 acts as the Proton donor in catalysis.

The protein belongs to the HisA/HisF family.

It is found in the cytoplasm. It carries out the reaction 1-(5-phospho-beta-D-ribosyl)-5-[(5-phospho-beta-D-ribosylamino)methylideneamino]imidazole-4-carboxamide = 5-[(5-phospho-1-deoxy-D-ribulos-1-ylimino)methylamino]-1-(5-phospho-beta-D-ribosyl)imidazole-4-carboxamide. Its pathway is amino-acid biosynthesis; L-histidine biosynthesis; L-histidine from 5-phospho-alpha-D-ribose 1-diphosphate: step 4/9. In Shewanella piezotolerans (strain WP3 / JCM 13877), this protein is 1-(5-phosphoribosyl)-5-[(5-phosphoribosylamino)methylideneamino] imidazole-4-carboxamide isomerase.